Here is a 325-residue protein sequence, read N- to C-terminus: NADH-quinone oxidoreductase subunit H (325 aa).

9 consecutive transmembrane segments (helical) span residues isoleucine 11–phenylalanine 31, asparagine 50–phenylalanine 69, valine 81–valine 101, isoleucine 114–glycine 134, valine 154–phenylalanine 174, leucine 186–valine 206, phenylalanine 237–phenylalanine 257, leucine 265–isoleucine 285, and valine 304–alanine 324.

The protein belongs to the complex I subunit 1 family. As to quaternary structure, NDH-1 is composed of 13 different subunits. Subunits NuoA, H, J, K, L, M, N constitute the membrane sector of the complex.

It localises to the cell inner membrane. The catalysed reaction is a quinone + NADH + 5 H(+)(in) = a quinol + NAD(+) + 4 H(+)(out). In terms of biological role, NDH-1 shuttles electrons from NADH, via FMN and iron-sulfur (Fe-S) centers, to quinones in the respiratory chain. The immediate electron acceptor for the enzyme in this species is believed to be ubiquinone. Couples the redox reaction to proton translocation (for every two electrons transferred, four hydrogen ions are translocated across the cytoplasmic membrane), and thus conserves the redox energy in a proton gradient. This subunit may bind ubiquinone. The sequence is that of NADH-quinone oxidoreductase subunit H from Salmonella agona (strain SL483).